The chain runs to 133 residues: Nickel-responsive regulator (133 aa).

4 residues coordinate Ni(2+): histidine 76, histidine 87, histidine 89, and cysteine 95.

Belongs to the transcriptional regulatory CopG/NikR family. As to quaternary structure, homotetramer. It depends on Ni(2+) as a cofactor.

In terms of biological role, transcriptional repressor of the nikABCDE operon. Is active in the presence of excessive concentrations of intracellular nickel. In Salmonella arizonae (strain ATCC BAA-731 / CDC346-86 / RSK2980), this protein is Nickel-responsive regulator.